Reading from the N-terminus, the 226-residue chain is Ribosomal RNA small subunit methyltransferase G (226 aa).

Residues glycine 83, phenylalanine 88, 136-137 (IE), and arginine 152 contribute to the S-adenosyl-L-methionine site. Positions 199–226 (FSPSQSDPEGSVLKVRGLHGPDGQPHRR) are disordered.

It belongs to the methyltransferase superfamily. RNA methyltransferase RsmG family.

It localises to the cytoplasm. It carries out the reaction guanosine(527) in 16S rRNA + S-adenosyl-L-methionine = N(7)-methylguanosine(527) in 16S rRNA + S-adenosyl-L-homocysteine. Functionally, specifically methylates the N7 position of guanine in position 527 of 16S rRNA. The polypeptide is Ribosomal RNA small subunit methyltransferase G (Parvibaculum lavamentivorans (strain DS-1 / DSM 13023 / NCIMB 13966)).